The sequence spans 443 residues: MSSTDSVVAGQAKVSTWRKTDTRWVLGLFGTAIGAGVLFFPISAGIGGLLPIIFMLILAFPIAFFCHRALARLCLSGRSISDNITDTVDQHFGHVGGVVITFLYFFAICPLLWIYGVTITNTFIAFWQHQLLLPAINRGVVALAILLVMAFFIYFGKDLMVKVMGYLVFPFITCLVLISLSLIPYWTSDIFTSFDMHSLSLFGSHGILVTVWLGIAIMVFSFNFSPIVSSFVVSKREEYEADFGREYTEQKCAKIISRASVLMVVVVMFFAFSCLFTLSPQDMAQAKQQNIPILSYLANHFSSLGSGKSTYATVLEYGASIIALVAIFKSFFGHYLGTLEGLNGLIIKFGYHGEKSQAPMKKLNMISMVIIMGSTWVIAYINPNILDLIGAMGAPIIAALLCLLPMYAVWRVPALAKYKGKASNYFVTIIGLLTILNIVYQLM.

11 helical membrane-spanning segments follow: residues 24–44 (WVLG…PISA), 45–65 (GIGG…IAFF), 95–115 (VGGV…LWIY), 140–160 (VVAL…KDLM), 163–183 (VMGY…LSLI), 207–227 (ILVT…FSPI), 259–279 (ASVL…FTLS), 319–339 (ASII…LGTL), 363–383 (LNMI…YINP), 385–405 (ILDL…CLLP), and 423–443 (SNYF…YQLM).

Belongs to the amino acid/polyamine transporter 2 family. SdaC/TdcC subfamily.

Its subcellular location is the cell inner membrane. It carries out the reaction L-threonine(in) + H(+)(in) = L-threonine(out) + H(+)(out). It catalyses the reaction L-serine(in) + H(+)(in) = L-serine(out) + H(+)(out). Its function is as follows. Involved in the import of threonine and serine into the cell, with the concomitant import of a proton (symport system). This chain is Threonine/serine transporter TdcC, found in Edwardsiella tarda.